Consider the following 394-residue polypeptide: Acetate kinase 1 (394 aa).

Asn8 contacts Mg(2+). Lys15 is an ATP binding site. Substrate is bound at residue Arg90. Asp147 functions as the Proton donor/acceptor in the catalytic mechanism. ATP contacts are provided by residues 207-211 and 282-284; these read HLGSG and DMR. Glu382 contacts Mg(2+).

This sequence belongs to the acetokinase family. Homodimer. Requires Mg(2+) as cofactor. It depends on Mn(2+) as a cofactor.

The protein resides in the cytoplasm. It carries out the reaction acetate + ATP = acetyl phosphate + ADP. Its pathway is metabolic intermediate biosynthesis; acetyl-CoA biosynthesis; acetyl-CoA from acetate: step 1/2. In terms of biological role, catalyzes the formation of acetyl phosphate from acetate and ATP. Can also catalyze the reverse reaction. This chain is Acetate kinase 1, found in Latilactobacillus sakei subsp. sakei (strain 23K) (Lactobacillus sakei subsp. sakei).